A 2639-amino-acid polypeptide reads, in one-letter code: BAH and coiled-coil domain-containing protein 1 (2639 aa).

Disordered stretches follow at residues 23–49 (SAAA…GKYF), 84–107 (SAAS…GSHP), 188–249 (APAH…GKER), 669–702 (FLSS…RQPP), 716–746 (VSRS…PRST), 939–1047 (QRAA…QSTA), 1104–1331 (SDVH…HSSG), 1457–1513 (QREL…KKVK), 1582–1666 (KVKS…LGTE), 1722–1776 (EVKI…RDAL), 1868–1893 (FDDN…PLSA), and 2057–2119 (KKVS…DHFL). 2 stretches are compositionally biased toward low complexity: residues 24-41 (AAAA…QPPA) and 84-98 (SAAS…SSPP). 2 stretches are compositionally biased toward basic and acidic residues: residues 211-247 (GPKD…DGGK) and 679-698 (ERPD…DGEV). The residue at position 222 (Lys-222) is an N6-acetyllysine. Positions 946–964 (RKPEDQHLDLEEPAQEKAP) are enriched in basic and acidic residues. Over residues 972–988 (ALTPTAPGAPSPAAGPT) the composition is skewed to low complexity. The segment covering 989-1013 (KLPPCCHPPDPKPPASSPTPPPRPS) has biased composition (pro residues). The span at 1106–1122 (VHSSNLEDPETMQTTAP) shows a compositional bias: polar residues. Over residues 1182-1198 (LEGLQELQCAALLEAGG) the composition is skewed to low complexity. Positions 1212 to 1221 (AREERSREEG) are enriched in basic and acidic residues. Acidic residues predominate over residues 1244–1275 (LEDEGEQPAPEEDELEEDELGQQSMEDSEEDC). A compositionally biased stretch (pro residues) spans 1307–1324 (DSPPDPQPPAASGPPSTV). The stretch at 1439–1473 (EVGMRVRLAELQRRYKEKQRELARLQRKHDHERDE) forms a coiled coil. Residues 1457-1475 (QRELARLQRKHDHERDESS) show a composition bias toward basic and acidic residues. Basic residues predominate over residues 1478 to 1492 (PARRGPGRPRKRKHS). Residues 1751 to 1761 (GKKKAKGKAKG) are compositionally biased toward basic residues. The segment covering 1868-1888 (FDDNSSFSEEEEDEEEEEEDS) has biased composition (acidic residues). Ser-2274 carries the post-translational modification Phosphoserine. Disordered stretches follow at residues 2317–2336 (SDCH…LAAG), 2348–2383 (SSSS…SDDE), and 2432–2472 (GAGS…ENRP). Residues 2348 to 2371 (SSSSSGSSTSSSSGSVSTSSLCSS) show a composition bias toward low complexity. Residues 2372 to 2383 (DNEDSSYSSDDE) show a composition bias toward acidic residues. The span at 2432–2442 (GAGSGPSSSSK) shows a compositional bias: low complexity. A BAH domain is found at 2513–2633 (ETLRVGDCAV…PTTGRLVTAD (121 aa)).

This Homo sapiens (Human) protein is BAH and coiled-coil domain-containing protein 1.